Reading from the N-terminus, the 161-residue chain is Large ribosomal subunit protein uL15 (161 aa).

The interval 1 to 42 (MKLSDIADNAGSRKKRMRVGRGIGSGKGKQSGRGGKGQTARS) is disordered. The segment covering 21–37 (RGIGSGKGKQSGRGGKG) has biased composition (gly residues).

This sequence belongs to the universal ribosomal protein uL15 family. As to quaternary structure, part of the 50S ribosomal subunit.

Functionally, binds to the 23S rRNA. In Bradyrhizobium diazoefficiens (strain JCM 10833 / BCRC 13528 / IAM 13628 / NBRC 14792 / USDA 110), this protein is Large ribosomal subunit protein uL15.